Reading from the N-terminus, the 64-residue chain is Translation machinery-associated protein 7 homolog (64 aa).

The interval 1-64 is disordered; the sequence is MTGREGGKKK…TGGIKKSGKK (64 aa). Positions 21–50 form a coiled coil; the sequence is EMDEEDMAFKQKQKEQQKAMEAAKQKAAKG. Basic and acidic residues predominate over residues 27–44; sequence MAFKQKQKEQQKAMEAAK.

It belongs to the TMA7 family.

This is Translation machinery-associated protein 7 homolog from Aedes aegypti (Yellowfever mosquito).